A 663-amino-acid polypeptide reads, in one-letter code: UvrABC system protein B (663 aa).

Residues 1 to 10 (MIDKRDDKPF) are compositionally biased toward basic and acidic residues. Residues 1 to 23 (MIDKRDDKPFKLKSKYKPSGDQP) are disordered. Residues 31–271 (DNIEGGEKAQ…EQSIAKIQAE (241 aa)) form the Helicase ATP-binding domain. 44–51 (GATGTGKT) contacts ATP. A Beta-hairpin motif is present at residues 97-120 (YYDYYQPEAYVPSSDTYIEKDSSV). Residues 435–601 (QIDDLLGEIN…TIKKDIRGLI (167 aa)) enclose the Helicase C-terminal domain. The region spanning 627-662 (KEAINALQKQMQEAAELLDFELAAQMRDLILELKLM) is the UVR domain.

The protein belongs to the UvrB family. In terms of assembly, forms a heterotetramer with UvrA during the search for lesions. Interacts with UvrC in an incision complex.

It is found in the cytoplasm. In terms of biological role, the UvrABC repair system catalyzes the recognition and processing of DNA lesions. A damage recognition complex composed of 2 UvrA and 2 UvrB subunits scans DNA for abnormalities. Upon binding of the UvrA(2)B(2) complex to a putative damaged site, the DNA wraps around one UvrB monomer. DNA wrap is dependent on ATP binding by UvrB and probably causes local melting of the DNA helix, facilitating insertion of UvrB beta-hairpin between the DNA strands. Then UvrB probes one DNA strand for the presence of a lesion. If a lesion is found the UvrA subunits dissociate and the UvrB-DNA preincision complex is formed. This complex is subsequently bound by UvrC and the second UvrB is released. If no lesion is found, the DNA wraps around the other UvrB subunit that will check the other stand for damage. In Streptococcus pyogenes serotype M5 (strain Manfredo), this protein is UvrABC system protein B.